Consider the following 389-residue polypeptide: PqqA peptide cyclase (389 aa).

Positions 20-235 (VGLPLWLLAE…TNEYRARLEA (216 aa)) constitute a Radical SAM core domain. 3 residues coordinate [4Fe-4S] cluster: cysteine 34, cysteine 38, and cysteine 41.

The protein belongs to the radical SAM superfamily. PqqE family. In terms of assembly, interacts with PqqD. The interaction is necessary for activity of PqqE. [4Fe-4S] cluster serves as cofactor.

It carries out the reaction [PQQ precursor protein] + S-adenosyl-L-methionine = E-Y cross-linked-[PQQ precursor protein] + 5'-deoxyadenosine + L-methionine + H(+). It participates in cofactor biosynthesis; pyrroloquinoline quinone biosynthesis. Its function is as follows. Catalyzes the cross-linking of a glutamate residue and a tyrosine residue in the PqqA protein as part of the biosynthesis of pyrroloquinoline quinone (PQQ). The polypeptide is PqqA peptide cyclase (Pseudomonas fluorescens (strain ATCC BAA-477 / NRRL B-23932 / Pf-5)).